We begin with the raw amino-acid sequence, 318 residues long: Acetyl-coenzyme A carboxylase carboxyl transferase subunit alpha (318 aa).

A CoA carboxyltransferase C-terminal domain is found at 32 to 293 (NINEEIQRLE…REALREEWAR (262 aa)).

The protein belongs to the AccA family. In terms of assembly, acetyl-CoA carboxylase is a heterohexamer composed of biotin carboxyl carrier protein (AccB), biotin carboxylase (AccC) and two subunits each of ACCase subunit alpha (AccA) and ACCase subunit beta (AccD).

The protein localises to the cytoplasm. The enzyme catalyses N(6)-carboxybiotinyl-L-lysyl-[protein] + acetyl-CoA = N(6)-biotinyl-L-lysyl-[protein] + malonyl-CoA. It participates in lipid metabolism; malonyl-CoA biosynthesis; malonyl-CoA from acetyl-CoA: step 1/1. Component of the acetyl coenzyme A carboxylase (ACC) complex. First, biotin carboxylase catalyzes the carboxylation of biotin on its carrier protein (BCCP) and then the CO(2) group is transferred by the carboxyltransferase to acetyl-CoA to form malonyl-CoA. In Halorhodospira halophila (strain DSM 244 / SL1) (Ectothiorhodospira halophila (strain DSM 244 / SL1)), this protein is Acetyl-coenzyme A carboxylase carboxyl transferase subunit alpha.